We begin with the raw amino-acid sequence, 320 residues long: Ferrochelatase (320 aa).

Fe cation contacts are provided by His-194 and Glu-275.

The protein belongs to the ferrochelatase family.

It localises to the cytoplasm. The enzyme catalyses heme b + 2 H(+) = protoporphyrin IX + Fe(2+). It functions in the pathway porphyrin-containing compound metabolism; protoheme biosynthesis; protoheme from protoporphyrin-IX: step 1/1. Its function is as follows. Catalyzes the ferrous insertion into protoporphyrin IX. This chain is Ferrochelatase, found in Stenotrophomonas maltophilia (strain R551-3).